The chain runs to 524 residues: Sexual development regulator velC (524 aa).

Disordered regions lie at residues 114-195 (NRVL…PVHS), 322-349 (PGSGSGAGSSDTNTNSNDKSRHESMSSY), 380-413 (VDEEPDPNTAPAHPSSTDDSTYDASPRTVTHRFR), and 503-524 (GMGKGRRVGIGSSKVSSRARVE). Polar residues-rich tracts occupy residues 131–153 (TTGSLAQYSIQRPSTSRNMENAG) and 178–195 (LDSQYSGSTTAFPSPVHS). Positions 248 to 500 (SSSSRYRLFI…ELGFVELKTR (253 aa)) constitute a Velvet domain. Polar residues predominate over residues 393-402 (PSSTDDSTYD).

Belongs to the velvet family. VelC subfamily. Interacts with vosA.

The protein resides in the nucleus. Velvet-domain-containing protein that acts as a positive regulator of sexual development. Positively regulates the production of the sexual fruiting bodies called cleistothecia. The polypeptide is Sexual development regulator velC (Emericella nidulans (strain FGSC A4 / ATCC 38163 / CBS 112.46 / NRRL 194 / M139) (Aspergillus nidulans)).